Consider the following 260-residue polypeptide: MAVGKNKKLSKGKGQKKRAVDPFTRKDWYDIKAPTFFENRNVGKTFVNRSQGLKNADDSLKGRIVEASLADLNKDDEQAYRKFKLKVDGIQGRTCLTNFYGMDFTSDKLRSLVRKWQSLIEAHQDVKTTDGYLLRVFVIAFTKKRANQVKKNTYAKSSHIRAIRQKMFEIVQREANSCDLREFVAKLIPEVIGREVEKATQGIFPLKDVYVRKVKVLKAPKDDLNKLLEVHGGAAIAGAEDAGVKARNTEFKEPAPLASV.

Ala-2 carries the N-acetylalanine; partial modification.

It belongs to the eukaryotic ribosomal protein eS1 family. In terms of assembly, component of the small ribosomal subunit. Mature ribosomes consist of a small (40S) and a large (60S) subunit. The 40S subunit contains about 33 different proteins and 1 molecule of RNA (18S). The 60S subunit contains about 49 different proteins and 3 molecules of RNA (25S, 5.8S and 5S).

It localises to the cytoplasm. The chain is Small ribosomal subunit protein eS1 from Mycosarcoma maydis (Corn smut fungus).